The sequence spans 1368 residues: DNA-directed RNA polymerase subunit beta (1368 aa).

Belongs to the RNA polymerase beta chain family. As to quaternary structure, the RNAP catalytic core consists of 2 alpha, 1 beta, 1 beta' and 1 omega subunit. When a sigma factor is associated with the core the holoenzyme is formed, which can initiate transcription.

The catalysed reaction is RNA(n) + a ribonucleoside 5'-triphosphate = RNA(n+1) + diphosphate. DNA-dependent RNA polymerase catalyzes the transcription of DNA into RNA using the four ribonucleoside triphosphates as substrates. In Burkholderia multivorans (strain ATCC 17616 / 249), this protein is DNA-directed RNA polymerase subunit beta.